The sequence spans 520 residues: MMVINSVVVGTVVASKNVNEFEFVIENQVIDKIKKGEFVITKNTHGDYLLSKITKIVSVNALIGDKSEDASELAKIRGVIYSEEMLNNSSKFLASAKILGVINNESGSIESNVYPINVPQNVYLTKDDLLAKIFSNGSIEVGYLKVRSSTKVKLNAKELCSRHFAVLAMTGAGKSNTIAVLVQELFEKDKGKMNIVIVDPHGEYVKMRNTHILPAKLNPILVPEEHLAKLLGIGENSSVQKSFLVYAALTVKYECKENKKQISGLEYLKKIEEKLVECADKIANSEDKKRIYIEYYDGTRCRXKTVKKDDEMSINRVIEKLRWFINKNKNILGENEGMFDIKSDKINVLPLQKIEDEEAITIVGEFLKRVLKERIKSVHDEIVEIKALEKPTLVIIEEAHLFAAKNLKDRSGYWINRIAKEGRKFGVGLGLVSQRPKELNPTVLSQMNTKIILRIVEPTDQKYILESSENVGEDLLQDLPQLSTGEAIVVGSSLPLPALVKIKKYDGVLGGEDGLKNLKI.

ATP is bound by residues arginine 162, 171 to 176 (GAGKSN), and 501 to 502 (KI).

This sequence belongs to the HerA family.

It catalyses the reaction Couples ATP hydrolysis with the unwinding of duplex DNA at the replication fork by translocating in the 5'-3' direction. This creates two antiparallel DNA single strands (ssDNA). The leading ssDNA polymer is the template for DNA polymerase III holoenzyme which synthesizes a continuous strand.. It carries out the reaction ATP + H2O = ADP + phosphate + H(+). The catalysed reaction is Couples ATP hydrolysis with the unwinding of duplex DNA by translocating in the 3'-5' direction.. Its function is as follows. A probably bidirectional DNA helicase. The chain is Probable helicase MJECL08 from Methanocaldococcus jannaschii (strain ATCC 43067 / DSM 2661 / JAL-1 / JCM 10045 / NBRC 100440) (Methanococcus jannaschii).